The following is a 348-amino-acid chain: MGIRIQELRKQFEDFTALAGIDLDIRQGELLALLGPSGSGKTTLLRIIAGLEHADAGRVLFGDEDATTMSVQARRVGFVFQHYALFKHMSVYENVAFGLRVRRGKARWPESQISARVFELLSLVQLDGLEQRYPMQLSGGQRQRVALARALAIEPRVLLLDEPFGALDAQVRRDLRRWLREIHDRTGLTTVFVTHDQEEALELADRVAILNQGGIEQVASPDEVYNRPSSPFVYSFVGAVNRLPGCVGADGLEVAGIVLSCPPQLSGWGAVDLYVRPEDLVLDAQEGWSAIVLWSQRSGPRMRVRARLEHSAHEVEIELSSATDEYVEGQKLRLIPRHYGVFFSESGS.

The ABC transporter domain maps to 3–237 (IRIQELRKQF…PSSPFVYSFV (235 aa)). Position 35-42 (35-42 (GPSGSGKT)) interacts with ATP.

It belongs to the ABC transporter superfamily. Sulfate/tungstate importer (TC 3.A.1.6) family. As to quaternary structure, the complex is composed of two ATP-binding proteins (CysA), two transmembrane proteins (CysT and CysW) and a solute-binding protein (CysP).

Its subcellular location is the cell inner membrane. It carries out the reaction sulfate(out) + ATP + H2O = sulfate(in) + ADP + phosphate + H(+). It catalyses the reaction thiosulfate(out) + ATP + H2O = thiosulfate(in) + ADP + phosphate + H(+). Its function is as follows. Part of the ABC transporter complex CysAWTP involved in sulfate/thiosulfate import. Responsible for energy coupling to the transport system. This chain is Sulfate/thiosulfate import ATP-binding protein CysA, found in Xylella fastidiosa (strain Temecula1 / ATCC 700964).